We begin with the raw amino-acid sequence, 525 residues long: GMP synthase [glutamine-hydrolyzing] (525 aa).

A Glutamine amidotransferase type-1 domain is found at 16–205 (PVLVVDFGAQ…LHDFAGLGAQ (190 aa)). Catalysis depends on Cys93, which acts as the Nucleophile. Catalysis depends on residues His179 and Glu181. One can recognise a GMPS ATP-PPase domain in the interval 206 to 399 (WTPANIANAL…LGLPEEIVAR (194 aa)). Position 233–239 (233–239 (SGGVDSA)) interacts with ATP.

In terms of assembly, homodimer.

It carries out the reaction XMP + L-glutamine + ATP + H2O = GMP + L-glutamate + AMP + diphosphate + 2 H(+). Its pathway is purine metabolism; GMP biosynthesis; GMP from XMP (L-Gln route): step 1/1. Its function is as follows. Catalyzes the synthesis of GMP from XMP. This Mycobacterium bovis (strain BCG / Pasteur 1173P2) protein is GMP synthase [glutamine-hydrolyzing].